The following is a 621-amino-acid chain: Putative DNA 3'-5' helicase Rad25 (621 aa).

Residues 268 to 417 form the Helicase ATP-binding domain; sequence VERFTEQGSG…EIFTLIGPPI (150 aa). 281–288 lines the ATP pocket; it reads GPPGSGKT. The DEAH box signature appears at 371 to 374; that stretch reads DEVH. Residues 441–465 form a disordered region; sequence PWGDETEQSEYSSTSGHDRRQAAAS. The 153-residue stretch at 469-621 folds into the Helicase C-terminal domain; sequence KIDEIRYALA…EAVEPPAKTE (153 aa).

Belongs to the helicase family. RAD25/XPB subfamily.

The enzyme catalyses Couples ATP hydrolysis with the unwinding of duplex DNA by translocating in the 3'-5' direction.. It carries out the reaction ATP + H2O = ADP + phosphate + H(+). The protein is Putative DNA 3'-5' helicase Rad25 of Haloarcula marismortui (strain ATCC 43049 / DSM 3752 / JCM 8966 / VKM B-1809) (Halobacterium marismortui).